A 334-amino-acid polypeptide reads, in one-letter code: Ficolin-1 (334 aa).

The N-terminal stretch at 1 to 17 is a signal peptide; the sequence is MQWPTLWAFSGLLCLCP. Residues 47 to 117 form a disordered region; sequence SCPGFPGPPG…SLGEKELGDT (71 aa). Positions 50 to 88 constitute a Collagen-like domain; it reads GFPGPPGPKGEPGSPAGRGERGFQGSPGKMGPAGSKGEP. Residues 117 to 334 form the Fibrinogen C-terminal domain; sequence TLCQRGPRSC…KVAEMKIRAS (218 aa). 2 disulfides stabilise this stretch: C119–C147 and C126–C154. The interval 123–162 is a domain; contributes to trimerization; it reads PRSCKDLLTRGIFLTGWYTIHLPDCRPLTVLCDMDVDGGG. Positions 163-251 are b domain; contributes to trimerization; the sequence is WTVFQRRVDG…LTLGQFLEGT (89 aa). N261 is a glycosylation site (N-linked (GlcNAc...) asparagine). Ca(2+)-binding residues include D270 and D272. Cysteines 278 and 291 form a disulfide. 290–292 is an a carbohydrate binding site; the sequence is NCH. A p domain region spans residues 325-334; it reads KVAEMKIRAS.

The protein belongs to the ficolin lectin family. Homotrimer. Interacts with elastin/ELN. Interacts (via Fibrinogen C-terminal domain) with FFAR2. Interacts with CRP; may regulate monocyte activation by FCN1. In terms of tissue distribution, highly expressed in liver and spleen.

The protein resides in the secreted. It localises to the cell membrane. In terms of biological role, extracellular lectin functioning as a pattern-recognition receptor in innate immunity. Binds the sugar moieties of pathogen-associated molecular patterns (PAMPs) displayed on microbes and activates the lectin pathway of the complement system. May also activate monocytes through a G protein-coupled receptor, FFAR2, inducing the secretion of interleukin-8/IL-8. Binds preferentially to 9-O-acetylated 2-6-linked sialic acid derivatives and to various glycans containing sialic acid engaged in a 2-3 linkage. This Mus musculus (Mouse) protein is Ficolin-1 (Fcn1).